A 157-amino-acid chain; its full sequence is Nucleoside diphosphate kinase (157 aa).

Residues Lys12, Phe60, Arg88, Thr94, and Arg105 each coordinate ATP. The active-site Pros-phosphohistidine intermediate is the His121.

The protein belongs to the NDK family. Mg(2+) is required as a cofactor.

It is found in the cytoplasm. The catalysed reaction is a 2'-deoxyribonucleoside 5'-diphosphate + ATP = a 2'-deoxyribonucleoside 5'-triphosphate + ADP. It carries out the reaction a ribonucleoside 5'-diphosphate + ATP = a ribonucleoside 5'-triphosphate + ADP. In terms of biological role, major role in the synthesis of nucleoside triphosphates other than ATP. The ATP gamma phosphate is transferred to the NDP beta phosphate via a ping-pong mechanism, using a phosphorylated active-site intermediate. The polypeptide is Nucleoside diphosphate kinase (Pyrococcus horikoshii (strain ATCC 700860 / DSM 12428 / JCM 9974 / NBRC 100139 / OT-3)).